A 179-amino-acid polypeptide reads, in one-letter code: ATP synthase subunit delta (179 aa).

The protein belongs to the ATPase delta chain family. In terms of assembly, F-type ATPases have 2 components, F(1) - the catalytic core - and F(0) - the membrane proton channel. F(1) has five subunits: alpha(3), beta(3), gamma(1), delta(1), epsilon(1). F(0) has three main subunits: a(1), b(2) and c(10-14). The alpha and beta chains form an alternating ring which encloses part of the gamma chain. F(1) is attached to F(0) by a central stalk formed by the gamma and epsilon chains, while a peripheral stalk is formed by the delta and b chains.

The protein localises to the cell membrane. F(1)F(0) ATP synthase produces ATP from ADP in the presence of a proton or sodium gradient. F-type ATPases consist of two structural domains, F(1) containing the extramembraneous catalytic core and F(0) containing the membrane proton channel, linked together by a central stalk and a peripheral stalk. During catalysis, ATP synthesis in the catalytic domain of F(1) is coupled via a rotary mechanism of the central stalk subunits to proton translocation. Functionally, this protein is part of the stalk that links CF(0) to CF(1). It either transmits conformational changes from CF(0) to CF(1) or is implicated in proton conduction. This Staphylococcus aureus (strain bovine RF122 / ET3-1) protein is ATP synthase subunit delta.